A 303-amino-acid polypeptide reads, in one-letter code: N-acetyl-D-glucosamine kinase (303 aa).

Residues G4–K11 and G133–F140 contribute to the ATP site. 4 residues coordinate Zn(2+): H157, C177, C179, and C184.

Belongs to the ROK (NagC/XylR) family. NagK subfamily.

The enzyme catalyses N-acetyl-D-glucosamine + ATP = N-acetyl-D-glucosamine 6-phosphate + ADP + H(+). The protein operates within cell wall biogenesis; peptidoglycan recycling. Functionally, catalyzes the phosphorylation of N-acetyl-D-glucosamine (GlcNAc) derived from cell-wall degradation, yielding GlcNAc-6-P. This chain is N-acetyl-D-glucosamine kinase, found in Escherichia coli O7:K1 (strain IAI39 / ExPEC).